Reading from the N-terminus, the 939-residue chain is Isoleucine--tRNA ligase (939 aa).

The 'HIGH' region signature appears at 59–69 (PYANGDIHIGH). Glutamate 570 contacts L-isoleucyl-5'-AMP. Residues 611-615 (KMSKS) carry the 'KMSKS' region motif. ATP is bound at residue lysine 614. Cysteine 902, cysteine 905, cysteine 922, and cysteine 925 together coordinate Zn(2+).

Belongs to the class-I aminoacyl-tRNA synthetase family. IleS type 1 subfamily. In terms of assembly, monomer. The cofactor is Zn(2+).

It is found in the cytoplasm. It carries out the reaction tRNA(Ile) + L-isoleucine + ATP = L-isoleucyl-tRNA(Ile) + AMP + diphosphate. Its function is as follows. Catalyzes the attachment of isoleucine to tRNA(Ile). As IleRS can inadvertently accommodate and process structurally similar amino acids such as valine, to avoid such errors it has two additional distinct tRNA(Ile)-dependent editing activities. One activity is designated as 'pretransfer' editing and involves the hydrolysis of activated Val-AMP. The other activity is designated 'posttransfer' editing and involves deacylation of mischarged Val-tRNA(Ile). The polypeptide is Isoleucine--tRNA ligase (Nitrosomonas europaea (strain ATCC 19718 / CIP 103999 / KCTC 2705 / NBRC 14298)).